The chain runs to 252 residues: Phosphonates import ATP-binding protein PhnC 1 (252 aa).

Positions 2–244 (ISLNKLGVTY…QLEEIYQTLS (243 aa)) constitute an ABC transporter domain. 35-42 (GSSGAGKS) contacts ATP.

It belongs to the ABC transporter superfamily. Phosphonates importer (TC 3.A.1.9.1) family. In terms of assembly, the complex is composed of two ATP-binding proteins (PhnC), two transmembrane proteins (PhnE) and a solute-binding protein (PhnD).

It localises to the cell inner membrane. The enzyme catalyses phosphonate(out) + ATP + H2O = phosphonate(in) + ADP + phosphate + H(+). Its function is as follows. Part of the ABC transporter complex PhnCDE involved in phosphonates import. Responsible for energy coupling to the transport system. The polypeptide is Phosphonates import ATP-binding protein PhnC 1 (Trichodesmium erythraeum (strain IMS101)).